A 388-amino-acid chain; its full sequence is MSEHIVTPEDASAAPAIKSEKINLLDLNRQAMREFFKTLGEKPFRADQVMKWMYHYCCDDFDEMTDINKVLRGKLKEVAEIRAPEVVEEQRSSDGTIKWAIAVGDQRVETVYIPEDDRATLCVSSQVGCALECKFCSTAQQGFNRNLRVSEIIGQVWRAAKIIGAAKVTGQRPITNVVMMGMGEPLLNLTNVVPAMEIMLDDFGFGLSKRRVTLSTSGVVPALDKLGDMIDVALAISLHAPNDEIRDEIVPINKKYNIETFLAAVRRYIGKSNANQGRVTIEYVMLDHVNDGTEHAHQLAELLKDTPCKINLIPWNPFPGAPYGRSSNSRIDRFSKVLMSYGFTTIVRKTRGDDIDAACGQLAGDVIDRTKRTMRKRMQGEPIAVKAV.

Catalysis depends on glutamate 109, which acts as the Proton acceptor. The region spanning glutamate 115–aspartate 354 is the Radical SAM core domain. A disulfide bridge connects residues cysteine 122 and cysteine 359. [4Fe-4S] cluster is bound by residues cysteine 129, cysteine 133, and cysteine 136. Residues glycine 183 to glutamate 184, serine 215, serine 237 to histidine 239, and asparagine 316 each bind S-adenosyl-L-methionine. Residue cysteine 359 is the S-methylcysteine intermediate of the active site.

This sequence belongs to the radical SAM superfamily. RlmN family. The cofactor is [4Fe-4S] cluster.

It is found in the cytoplasm. The catalysed reaction is adenosine(2503) in 23S rRNA + 2 reduced [2Fe-2S]-[ferredoxin] + 2 S-adenosyl-L-methionine = 2-methyladenosine(2503) in 23S rRNA + 5'-deoxyadenosine + L-methionine + 2 oxidized [2Fe-2S]-[ferredoxin] + S-adenosyl-L-homocysteine. The enzyme catalyses adenosine(37) in tRNA + 2 reduced [2Fe-2S]-[ferredoxin] + 2 S-adenosyl-L-methionine = 2-methyladenosine(37) in tRNA + 5'-deoxyadenosine + L-methionine + 2 oxidized [2Fe-2S]-[ferredoxin] + S-adenosyl-L-homocysteine. In terms of biological role, specifically methylates position 2 of adenine 2503 in 23S rRNA and position 2 of adenine 37 in tRNAs. m2A2503 modification seems to play a crucial role in the proofreading step occurring at the peptidyl transferase center and thus would serve to optimize ribosomal fidelity. The sequence is that of Dual-specificity RNA methyltransferase RlmN from Cronobacter sakazakii (strain ATCC BAA-894) (Enterobacter sakazakii).